A 115-amino-acid chain; its full sequence is NADH-ubiquinone oxidoreductase chain 3 (115 aa).

3 consecutive transmembrane segments (helical) span residues 3-23 (FVLILMTNTLLALLLMIITFW), 55-75 (FFLVAITFLLFDLEIALLLPL), and 84-104 (LPLMVMSSLLLITILALSLAY).

It belongs to the complex I subunit 3 family. As to quaternary structure, core subunit of respiratory chain NADH dehydrogenase (Complex I) which is composed of 45 different subunits. Interacts with TMEM186. Interacts with TMEM242.

It localises to the mitochondrion inner membrane. It catalyses the reaction a ubiquinone + NADH + 5 H(+)(in) = a ubiquinol + NAD(+) + 4 H(+)(out). Core subunit of the mitochondrial membrane respiratory chain NADH dehydrogenase (Complex I) which catalyzes electron transfer from NADH through the respiratory chain, using ubiquinone as an electron acceptor. Essential for the catalytic activity of complex I. The protein is NADH-ubiquinone oxidoreductase chain 3 of Pan paniscus (Pygmy chimpanzee).